A 173-amino-acid chain; its full sequence is Glutamyl-tRNA(Gln) amidotransferase subunit C-1, mitochondrial (173 aa).

A mitochondrion-targeting transit peptide spans 1–23; that stretch reads MIRIPFRLRPPPGRTLHSLVRTF. The disordered stretch occupies residues 51-70; that stretch reads PSKVPQRPHKSTTTVGQSTP. Polar residues predominate over residues 61–70; that stretch reads STTTVGQSTP.

It belongs to the GatC family. In terms of assembly, subunit of the heterotrimeric GatCAB amidotransferase (AdT) complex, composed of A, B and C subunits.

It localises to the mitochondrion. The enzyme catalyses L-glutamyl-tRNA(Gln) + L-glutamine + ATP + H2O = L-glutaminyl-tRNA(Gln) + L-glutamate + ADP + phosphate + H(+). Allows the formation of correctly charged Gln-tRNA(Gln) through the transamidation of misacylated Glu-tRNA(Gln) in the mitochondria. The reaction takes place in the presence of glutamine and ATP through an activated gamma-phospho-Glu-tRNA(Gln). The sequence is that of Glutamyl-tRNA(Gln) amidotransferase subunit C-1, mitochondrial from Culex quinquefasciatus (Southern house mosquito).